The following is a 315-amino-acid chain: L-threo-3-deoxy-hexylosonate aldolase (315 aa).

Residue Ser-50 to Asn-51 coordinates substrate. Lys-174 acts as the Schiff-base intermediate with substrate in catalysis.

The protein belongs to the DapA family.

It catalyses the reaction 2-dehydro-3-deoxy-L-galactonate = L-glyceraldehyde + pyruvate. It participates in carbohydrate acid metabolism. Its function is as follows. Mediates the conversion of 2-dehydro-3-deoxy-L-galactonate to pyruvate and L-glyceraldehyde in D-galacturonate catabolic process. The chain is L-threo-3-deoxy-hexylosonate aldolase (lga1) from Hypocrea jecorina (Trichoderma reesei).